The sequence spans 629 residues: 1-deoxy-D-xylulose-5-phosphate synthase (629 aa).

Thiamine diphosphate contacts are provided by residues His-85 and 126–128 (GHS). Asp-157 provides a ligand contact to Mg(2+). Residues 158–159 (GS), Asn-186, Tyr-293, and Glu-373 each bind thiamine diphosphate. Asn-186 is a Mg(2+) binding site.

Belongs to the transketolase family. DXPS subfamily. In terms of assembly, homodimer. It depends on Mg(2+) as a cofactor. Thiamine diphosphate is required as a cofactor.

The catalysed reaction is D-glyceraldehyde 3-phosphate + pyruvate + H(+) = 1-deoxy-D-xylulose 5-phosphate + CO2. It functions in the pathway metabolic intermediate biosynthesis; 1-deoxy-D-xylulose 5-phosphate biosynthesis; 1-deoxy-D-xylulose 5-phosphate from D-glyceraldehyde 3-phosphate and pyruvate: step 1/1. Functionally, catalyzes the acyloin condensation reaction between C atoms 2 and 3 of pyruvate and glyceraldehyde 3-phosphate to yield 1-deoxy-D-xylulose-5-phosphate (DXP). This chain is 1-deoxy-D-xylulose-5-phosphate synthase, found in Helicobacter hepaticus (strain ATCC 51449 / 3B1).